Reading from the N-terminus, the 466-residue chain is Ribulose bisphosphate carboxylase large chain (466 aa).

Lys-4 is modified (N6,N6,N6-trimethyllysine). 2 residues coordinate substrate: Asn-113 and Thr-163. Lys-165 (proton acceptor) is an active-site residue. Lys-167 lines the substrate pocket. Residues Lys-191, Asp-193, and Glu-194 each contribute to the Mg(2+) site. The residue at position 191 (Lys-191) is an N6-carboxylysine. Residue His-284 is the Proton acceptor of the active site. Substrate-binding residues include Arg-285, His-317, and Ser-369.

This sequence belongs to the RuBisCO large chain family. Type I subfamily. In terms of assembly, heterohexadecamer of 8 large chains and 8 small chains; disulfide-linked. The disulfide link is formed within the large subunit homodimers. Requires Mg(2+) as cofactor. The disulfide bond which can form in the large chain dimeric partners within the hexadecamer appears to be associated with oxidative stress and protein turnover.

It localises to the plastid. Its subcellular location is the chloroplast. It carries out the reaction 2 (2R)-3-phosphoglycerate + 2 H(+) = D-ribulose 1,5-bisphosphate + CO2 + H2O. The enzyme catalyses D-ribulose 1,5-bisphosphate + O2 = 2-phosphoglycolate + (2R)-3-phosphoglycerate + 2 H(+). Its function is as follows. RuBisCO catalyzes two reactions: the carboxylation of D-ribulose 1,5-bisphosphate, the primary event in carbon dioxide fixation, as well as the oxidative fragmentation of the pentose substrate in the photorespiration process. Both reactions occur simultaneously and in competition at the same active site. The sequence is that of Ribulose bisphosphate carboxylase large chain from Pinguicula caerulea (Blueflower butterwort).